Consider the following 691-residue polypeptide: MPSTRKLFVTTALPYANGPFHLGHLMEYIQADIWVRFQRMQGHEVNFVGADDTHGAPIMIAAEKAGKTPQQFVADIAAGRKPYLDGFHLSFDNWHSTDAPENHELARQIYRDLRDRADGSLIERRSIEQFFDPGKSMFLPDRYIVGECPRCHAKEQYGDNCEQCGSVYAPAELIDPVSALSGAKPELRSSEHFFFKLSDPRCVEFLQRWTQDGKLQPEVANKVREWFGLRSNPDGSCSEGLDDWDISRDAPYFGIEIPDAPGKYFYVWLDAPVGYLAALKNLLEKRGQNYDAYMADPALEQYHFIGKDIVTFHTLFWPAMLHLSGRKTPDNVFVHGFLTINGEKMSKSRGTGLDPLKYLSLGMNAEWLRYYLATKLSARNEDMDLGTEDFMVRVNSDLIGKYVNIASRAAGFLTKRFAGRLTSDFGAAGLALLADLHGARDTIAQWYQAREFGKATREIMLLADKVNAYVDRNKPWELAKDAANGQALHQVCSVLINAFATLTRYLSPVLPALARAAQDFVGQDMQRWDAGGAVQAIAPYQHLMQRVTPEQLAALFQPPAAAQIAAAGAQEPGGLALAPGIGIDDFDRVDLRVALIVDCAAVAGSTKLLRLTLDIGEGRQRQVFSGIASACQPADLIGKHTVMVANLAPRRLKFGVSEGMVLAASHGDEKANPGIYLLAPGPGAKPGMRVR.

The 'HIGH' region signature appears at Pro14–His24. Zn(2+)-binding residues include Cys148, Cys151, Cys161, and Cys164. Residues Lys344–Ser348 carry the 'KMSKS' region motif. Residue Lys347 coordinates ATP. One can recognise a tRNA-binding domain in the interval Asp585–Arg691.

This sequence belongs to the class-I aminoacyl-tRNA synthetase family. MetG type 1 subfamily. Homodimer. Requires Zn(2+) as cofactor.

The protein localises to the cytoplasm. The enzyme catalyses tRNA(Met) + L-methionine + ATP = L-methionyl-tRNA(Met) + AMP + diphosphate. Is required not only for elongation of protein synthesis but also for the initiation of all mRNA translation through initiator tRNA(fMet) aminoacylation. In Verminephrobacter eiseniae (strain EF01-2), this protein is Methionine--tRNA ligase.